Here is a 439-residue protein sequence, read N- to C-terminus: NAD-dependent malic enzyme 1 (439 aa).

The ACT domain occupies 9-84 (TLMIETPSVP…GIRLHTVSDE (76 aa)). The active-site Proton donor is the Tyr112. Lys167 acts as the Proton acceptor in catalysis. A divalent metal cation-binding residues include Glu209, Asp210, and Asp235. Residues 268–271 (LGAA), Asn347, and Asn373 contribute to the NAD(+) site.

Belongs to the malic enzymes family. Requires Mg(2+) as cofactor. The cofactor is Mn(2+).

It catalyses the reaction (S)-malate + NAD(+) = pyruvate + CO2 + NADH. The catalysed reaction is oxaloacetate + H(+) = pyruvate + CO2. In terms of biological role, catalyzes the decarboxylation of malate to pyruvate. Is specific for NAD, cannot use NADP. Can also catalyze the decarboxylation of oxaloacetate. Involved in keeping the ATP levels high. The polypeptide is NAD-dependent malic enzyme 1 (Bacillus subtilis (strain 168)).